The chain runs to 107 residues: Guanine nucleotide-binding protein G(I)/G(S)/G(O) subunit gamma-14 (107 aa).

Residues 69 to 107 (KMAADLLKFCTEQAKNDPFLVGIPAATNSFKEKKPYAIL) enclose the G protein gamma domain.

It belongs to the G protein gamma family. In terms of assembly, g proteins are composed of 3 units; alpha, beta and gamma.

It is found in the cell membrane. Functionally, guanine nucleotide-binding proteins (G proteins) are involved as a modulator or transducer in various transmembrane signaling systems. The beta and gamma chains are required for the GTPase activity, for replacement of GDP by GTP, and for G protein-effector interaction. The polypeptide is Guanine nucleotide-binding protein G(I)/G(S)/G(O) subunit gamma-14 (Homo sapiens (Human)).